The following is a 317-amino-acid chain: Olfactory receptor 6Q1 (317 aa).

Over 1 to 27 (MQPYTKNWTQVTEFVMMGFAGIHEAHL) the chain is Extracellular. Asparagine 7 carries N-linked (GlcNAc...) asparagine glycosylation. The chain crosses the membrane as a helical span at residues 28 to 48 (LFFILFLTMYLFTLVENLAII). Residues 49 to 56 (LVVGLDHR) lie on the Cytoplasmic side of the membrane. A helical membrane pass occupies residues 57-77 (LRRPMYFFLTHLSCLEIWYTS). The Extracellular segment spans residues 78-103 (VTVPKMLAGFIGVDGGKNISYADCLS). N-linked (GlcNAc...) asparagine glycosylation occurs at asparagine 95. A disulfide bridge connects residues cysteine 101 and cysteine 193. Residues 104–124 (QLFIFTFLGATECFLLAAMAY) form a helical membrane-spanning segment. At 125–143 (DRYVAICMPLHYGAFVSWG) the chain is on the cytoplasmic side. The chain crosses the membrane as a helical span at residues 144 to 164 (TCIRLAAACWLVGFLTPILPI). Over 165–201 (YLLSQLTFYGPNVIDHFSCDASPLLALSCSDVTWKET) the chain is Extracellular. A helical membrane pass occupies residues 202–221 (VDFLVSLAVLLASSMVIAVS). Topologically, residues 222–241 (YGNIVWTLLHIRSAAERWKA) are cytoplasmic. Residues 242–262 (FSTCAAHLTVVSLFYGTLFFM) traverse the membrane as a helical segment. Residues 263–275 (YVQTKVTSSINFN) lie on the Extracellular side of the membrane. The helical transmembrane segment at 276 to 296 (KVVSVFYSVVTPMLNPLIYSL) threads the bilayer. The Cytoplasmic portion of the chain corresponds to 297-317 (RNKEVKGALGRVFSLNFWKGQ).

Belongs to the G-protein coupled receptor 1 family.

It is found in the cell membrane. In terms of biological role, odorant receptor. The protein is Olfactory receptor 6Q1 (OR6Q1) of Homo sapiens (Human).